Reading from the N-terminus, the 346-residue chain is Putative serine/threonine-protein kinase K06H7.1 (346 aa).

One can recognise a Protein kinase domain in the interval 20-287 (YKVVQKLGEG…KLFKLLEDVM (268 aa)). Residues 26-34 (LGEGGCGSV) and Lys50 contribute to the ATP site. Asp141 acts as the Proton acceptor in catalysis. The interval 302–326 (PEKKKNPASQGNKFGLGKKGTKESG) is disordered.

Belongs to the protein kinase superfamily. Ser/Thr protein kinase family.

It carries out the reaction L-seryl-[protein] + ATP = O-phospho-L-seryl-[protein] + ADP + H(+). The enzyme catalyses L-threonyl-[protein] + ATP = O-phospho-L-threonyl-[protein] + ADP + H(+). The sequence is that of Putative serine/threonine-protein kinase K06H7.1 from Caenorhabditis elegans.